A 288-amino-acid polypeptide reads, in one-letter code: Centromere protein P (288 aa).

Residues 1–71 are a coiled coil; the sequence is MDAELAEVRA…HLESELSFLS (71 aa). At S38 the chain carries Phosphoserine.

Belongs to the CENP-P/CTF19 family. As to quaternary structure, component of the CENPA-CAD complex, composed of CENPI, CENPK, CENPL, CENPO, CENPP, CENPQ, CENPR and CENPS. The CENPA-CAD complex interacts with the CENPA-NAC complex, at least composed of CENPA, CENPC, CENPH, CENPM, CENPN, CENPT and CENPU.

The protein resides in the nucleus. It localises to the chromosome. The protein localises to the centromere. In terms of biological role, component of the CENPA-CAD (nucleosome distal) complex, a complex recruited to centromeres which is involved in assembly of kinetochore proteins, mitotic progression and chromosome segregation. May be involved in incorporation of newly synthesized CENPA into centromeres via its interaction with the CENPA-NAC complex. This is Centromere protein P (CENPP) from Homo sapiens (Human).